The chain runs to 493 residues: Alpha-amylase-related protein (493 aa).

The first 19 residues, 1–19 (MFKFALTQTLCLAGSLSLA), serve as a signal peptide directing secretion. Gln20 bears the Pyrrolidone carboxylic acid mark. A disulfide bridge connects residues Cys47 and Cys103. Ca(2+) is bound by residues Asn117, Gln168, and Asp177. An intrachain disulfide couples Cys156 to Cys170. Residue Arg205 coordinates chloride. Catalysis depends on Asp207, which acts as the Nucleophile. Residue His211 coordinates Ca(2+). Catalysis depends on Glu244, which acts as the Proton donor. 2 residues coordinate chloride: Asn307 and Arg342. Intrachain disulfides connect Cys375–Cys381, Cys417–Cys440, and Cys447–Cys459.

This sequence belongs to the glycosyl hydrolase 13 family. In terms of assembly, monomer. Ca(2+) is required as a cofactor. The cofactor is chloride.

Its subcellular location is the secreted. It catalyses the reaction Endohydrolysis of (1-&gt;4)-alpha-D-glucosidic linkages in polysaccharides containing three or more (1-&gt;4)-alpha-linked D-glucose units.. The sequence is that of Alpha-amylase-related protein (Amyrel) from Drosophila mauritiana (Fruit fly).